A 647-amino-acid chain; its full sequence is Beta-glucosidase-like SFR2, chloroplastic (647 aa).

Residues 116-140 form a disordered region; the sequence is SAAGDGGSQQSWRSTGGENIGDREQ. A compositionally biased stretch (polar residues) spans 123 to 132; the sequence is SQQSWRSTGG. Asn169 carries N-linked (GlcNAc...) asparagine glycosylation. Residues His258, 302 to 303, Tyr414, Glu466, Trp504, 511 to 512, and Phe520 each bind a beta-D-glucoside; these read NE and EW. Glu303 functions as the Proton donor in the catalytic mechanism. Glu466 functions as the Nucleophile in the catalytic mechanism.

It belongs to the glycosyl hydrolase 1 family.

Its subcellular location is the plastid. It localises to the chloroplast outer membrane. It catalyses the reaction 2 a 1,2-diacyl-3-O-(beta-D-galactosyl)-sn-glycerol = a 1,2-diacyl-3-O-[beta-D-galactosyl-(1-&gt;6)-beta-D-galactosyl]-sn-glycerol + a 1,2-diacyl-sn-glycerol. Galactosyltransferase synthesizing digalactosyldiacylglycerol from monogalactosyldiacylglycerol in the absence of UDP-galactose. Potentially involved in freezing tolerance. The sequence is that of Beta-glucosidase-like SFR2, chloroplastic from Oryza sativa subsp. japonica (Rice).